A 137-amino-acid polypeptide reads, in one-letter code: uncharacterized protein (137 aa).

The next 2 helical transmembrane spans lie at 26 to 42 (CSLCILSMAISTSFFAM) and 52 to 69 (ASIPIYPLSLTFLCGSIL).

It localises to the membrane. This is an uncharacterized protein from Saccharomyces cerevisiae (strain ATCC 204508 / S288c) (Baker's yeast).